An 84-amino-acid polypeptide reads, in one-letter code: Large ribosomal subunit protein bL27 (84 aa).

The tract at residues 1-20 (MAHKKAGGSTRNGRDSNPKY) is disordered.

Belongs to the bacterial ribosomal protein bL27 family.

In Francisella philomiragia subsp. philomiragia (strain ATCC 25017 / CCUG 19701 / FSC 153 / O#319-036), this protein is Large ribosomal subunit protein bL27.